The primary structure comprises 414 residues: MNRQSWLLNLSLLKTHPAFRAVFLARFISIVSLGLLGVAVPVQIQMMTHSTWQVGLSVTLTGGAMFIGLMVGGVLADRYERKKVILLARGTCGIGFIGLCVNALLPEPSLLAIYLLGLWDGFFASLGVTALLAATPALVGRENLMQAGAITMLTVRLGSVISPMLGGILLASGGVAWNYGLAAAGTFITLLPLLTLPRLPVPPQPRENPFIALLAAFRFLLASPLIGGIALLGGLVTMASAVRVLYPALAMSWQMSAAQIGLLYAAIPLGAAIGALTSGQLAHSVRPGLIMLVSTVGSFLAVGLFAIMPIWIAGVICLALFGWLSAISSLLQYTLLQTQTPENMLGRMNGLWTAQNVTGDAIGAALLGGLGAMMTPVASASVSGFGLVIIGLLLLLVLGELRRFRQTPPVSDAG.

Residues 1–21 lie on the Cytoplasmic side of the membrane; the sequence is MNRQSWLLNLSLLKTHPAFRA. A helical transmembrane segment spans residues 22 to 42; sequence VFLARFISIVSLGLLGVAVPV. Over 43–55 the chain is Periplasmic; sequence QIQMMTHSTWQVG. The chain crosses the membrane as a helical span at residues 56–76; sequence LSVTLTGGAMFIGLMVGGVLA. Over 77-83 the chain is Cytoplasmic; the sequence is DRYERKK. A helical membrane pass occupies residues 84 to 104; it reads VILLARGTCGIGFIGLCVNAL. Over 105-109 the chain is Periplasmic; it reads LPEPS. Residues 110-130 form a helical membrane-spanning segment; the sequence is LLAIYLLGLWDGFFASLGVTA. The Cytoplasmic portion of the chain corresponds to 131–156; it reads LLAATPALVGRENLMQAGAITMLTVR. The helical transmembrane segment at 157–177 threads the bilayer; sequence LGSVISPMLGGILLASGGVAW. Position 178 (Asn178) is a topological domain, periplasmic. A helical membrane pass occupies residues 179 to 199; it reads YGLAAAGTFITLLPLLTLPRL. Topologically, residues 200–218 are cytoplasmic; the sequence is PVPPQPRENPFIALLAAFR. Residues 219–239 traverse the membrane as a helical segment; that stretch reads FLLASPLIGGIALLGGLVTMA. Residues 240–256 lie on the Periplasmic side of the membrane; the sequence is SAVRVLYPALAMSWQMS. Residues 257 to 277 traverse the membrane as a helical segment; the sequence is AAQIGLLYAAIPLGAAIGALT. Residues 278–287 lie on the Cytoplasmic side of the membrane; it reads SGQLAHSVRP. The helical transmembrane segment at 288 to 307 threads the bilayer; it reads GLIMLVSTVGSFLAVGLFAI. Topologically, residues 308-313 are periplasmic; the sequence is MPIWIA. Residues 314–336 traverse the membrane as a helical segment; sequence GVICLALFGWLSAISSLLQYTLL. The Cytoplasmic segment spans residues 337–356; it reads QTQTPENMLGRMNGLWTAQN. The chain crosses the membrane as a helical span at residues 357 to 377; sequence VTGDAIGAALLGGLGAMMTPV. Residue Ala378 is a topological domain, periplasmic. Residues 379-399 form a helical membrane-spanning segment; that stretch reads SASVSGFGLVIIGLLLLLVLG. Residues 400–414 are Cytoplasmic-facing; sequence ELRRFRQTPPVSDAG.

The protein belongs to the major facilitator superfamily. EntS (TC 2.A.1.38) family.

It is found in the cell inner membrane. Its function is as follows. Component of an export pathway for enterobactin. The sequence is that of Enterobactin exporter EntS from Salmonella typhi.